The following is a 502-amino-acid chain: Reduced meiotic recombination protein C1442.04c (502 aa).

A phosphoserine mark is found at Ser328, Ser330, and Ser331. 3 disordered regions span residues Asn353–Asn391, Gly420–Asp440, and Glu454–Asp502. Residues Asp367 to Asp378 are compositionally biased toward acidic residues. Composition is skewed to polar residues over residues Gly420 to Gly436 and Gly462 to Thr477.

Belongs to the RMR1 family.

Its subcellular location is the cytoplasm. The protein resides in the nucleus. Required for normal levels of gene conversion events during meiosis. This is Reduced meiotic recombination protein C1442.04c from Schizosaccharomyces pombe (strain 972 / ATCC 24843) (Fission yeast).